The chain runs to 311 residues: Probable manganese-dependent inorganic pyrophosphatase (311 aa).

Residues histidine 9, aspartate 13, aspartate 15, aspartate 77, histidine 99, and aspartate 151 each contribute to the Mn(2+) site.

Belongs to the PPase class C family. It depends on Mn(2+) as a cofactor.

Its subcellular location is the cytoplasm. The catalysed reaction is diphosphate + H2O = 2 phosphate + H(+). The polypeptide is Probable manganese-dependent inorganic pyrophosphatase (Streptococcus suis (strain 98HAH33)).